A 301-amino-acid polypeptide reads, in one-letter code: Immune-associated nucleotide-binding protein 5 (301 aa).

Residues 11–214 (EPVRNIVLVG…FTEENDLNEK (204 aa)) enclose the AIG1-type G domain. Positions 20-27 (GPTGNGKS) are G1. Position 20–28 (20–28 (GPTGNGKSS)) interacts with GTP. The G2 stretch occupies residues 46–50 (CKTCK). Positions 63–66 (DTPG) are G3. The interval 133 to 136 (TGGD) is G4. Residues 172 to 174 (NNK) form a G5 region. Asn-173 provides a ligand contact to GTP.

This sequence belongs to the TRAFAC class TrmE-Era-EngA-EngB-Septin-like GTPase superfamily. AIG1/Toc34/Toc159-like paraseptin GTPase family. IAN subfamily. In terms of tissue distribution, expressed in pollen, cotyledons and lateral roots.

The polypeptide is Immune-associated nucleotide-binding protein 5 (Arabidopsis thaliana (Mouse-ear cress)).